A 1588-amino-acid chain; its full sequence is Paternally-expressed gene 3 protein (1588 aa).

Residues 46 to 128 (HQRFRNLIYV…TLLENYKEMY (83 aa)) form the SCAN box domain. Disordered regions lie at residues 128–230 (YQPE…ESYQ), 266–306 (DGHS…RRGI), and 319–349 (KFIK…MSDD). The segment covering 129–142 (QPEDDNNSDVTSDD) has biased composition (acidic residues). 4 stretches are compositionally biased toward basic and acidic residues: residues 143–152 (DMTRNRRESS), 161–182 (SGDR…DRWS), 206–225 (FEMD…RSQD), and 295–306 (PEAKKSTHRRGI). 3 C2H2-type zinc fingers span residues 454–476 (YVCD…QIMH), 507–529 (FECK…RKIH), and 565–587 (YECR…QKIH). The segment covering 588–607 (FGDDKDNEREHERERERGET) has biased composition (basic and acidic residues). The tract at residues 588-610 (FGDDKDNEREHERERERGETFRP) is disordered. The C2H2-type 4 zinc-finger motif lies at 627-649 (YECKVCGETFLHSSSLKEHQKIH). The disordered stretch occupies residues 838–930 (LVASKPPRSH…EFSVPSSNVR (93 aa)). The segment covering 868–881 (LNDKRQKIPARENP) has biased composition (basic and acidic residues). Residues 969 to 991 (YECQECGECFAHSSDLTEHQKIH) form a C2H2-type 5 zinc finger. The tract at residues 1056–1104 (EKSHGEESQGENTDGEETHSEETHGQETIEDPVIQGSDMEDPQKDDPDD) is disordered. Residues 1071-1082 (EETHSEETHGQE) show a composition bias toward basic and acidic residues. 5 consecutive C2H2-type zinc fingers follow at residues 1107 to 1129 (YECE…QKVH), 1163 to 1185 (YECP…QRIH), 1225 to 1247 (IRCL…MRLH), 1282 to 1304 (FECA…VTVH), and 1332 to 1354 (YECK…KELH). A disordered region spans residues 1393-1495 (EAAEPEVEAX…GIEDPEEGED (103 aa)). The segment covering 1395-1415 (AEPEVEAXEPEVEAAEPEVEA) has biased composition (acidic residues). 7 consecutive repeat copies span residues 1397 to 1403 (PEVEAXE), 1404 to 1410 (PEVEAAE), 1411 to 1417 (PEVEAAE), 1418 to 1422 (PNGEA), 1425 to 1429 (PDGEA), 1432 to 1436 (PIGEA), and 1439 to 1443 (PNGEA). A 3 X 7 AA repeat of P-E-V-E-A-A-E region spans residues 1397-1417 (PEVEAXEPEVEAAEPEVEAAE). The 4 X 5 AA repeat of P-X-G-E-A stretch occupies residues 1418–1443 (PNGEAEGPDGEAAEPIGEAGQPNGEA). 2 stretches are compositionally biased toward acidic residues: residues 1449 to 1466 (DADE…ERAE) and 1475 to 1495 (PEGD…EGED). 2 C2H2-type zinc fingers span residues 1505–1527 (YDCH…LKTH) and 1564–1586 (FKCD…QNTH).

The protein belongs to the krueppel C2H2-type zinc-finger protein family. As to quaternary structure, homodimer. Interacts with SIAH1A and SIAH2. Interacts with TRAF2.

It localises to the nucleus. It is found in the cytoplasm. Induces apoptosis in cooperation with SIAH1A. Acts as a mediator between p53/TP53 and BAX in a neuronal death pathway that is activated by DNA damage. Acts synergistically with TRAF2 and inhibits TNF induced apoptosis through activation of NF-kappa-B. The protein is Paternally-expressed gene 3 protein (PEG3) of Pan paniscus (Pygmy chimpanzee).